The primary structure comprises 114 residues: Large ribosomal subunit protein uL22 (114 aa).

Belongs to the universal ribosomal protein uL22 family. As to quaternary structure, part of the 50S ribosomal subunit.

Functionally, this protein binds specifically to 23S rRNA; its binding is stimulated by other ribosomal proteins, e.g. L4, L17, and L20. It is important during the early stages of 50S assembly. It makes multiple contacts with different domains of the 23S rRNA in the assembled 50S subunit and ribosome. Its function is as follows. The globular domain of the protein is located near the polypeptide exit tunnel on the outside of the subunit, while an extended beta-hairpin is found that lines the wall of the exit tunnel in the center of the 70S ribosome. This is Large ribosomal subunit protein uL22 from Streptococcus pyogenes serotype M6 (strain ATCC BAA-946 / MGAS10394).